Consider the following 636-residue polypeptide: Epsin-3 (636 aa).

6 residues coordinate a 1,2-diacyl-sn-glycero-3-phospho-(1D-myo-inositol-4,5-bisphosphate): Arg8, Lys11, Arg25, Asn30, Arg63, and His73. Positions 12–144 constitute an ENTH domain; the sequence is NIVHNYSEAE…KDEERLRQER (133 aa). The segment at 153–503 is disordered; it reads RMALEGMGIG…TPESFLGPSA (351 aa). Positions 174 to 189 are enriched in low complexity; sequence GSPSSYTSASSSPRYA. Residues Ser184 and Ser185 each carry the phosphoserine modification. UIM domains lie at 202-221 and 229-248; these read EEEL…AERP and DEDL…HEKG. Composition is skewed to basic and acidic residues over residues 214–231 and 242–256; these read SREE…RDED and RQEH…KGDD. Ser257 carries the phosphoserine modification. A compositionally biased stretch (basic and acidic residues) spans 270–288; the sequence is RQRDREPEREERKEEEKLK. Tandem repeats lie at residues 315–317, 338–340, 365–367, 381–383, and 398–400. The 5 X 3 AA repeats of [DE]-P-W stretch occupies residues 315-400; that stretch reads DPWDIPGLRP…KLPSTGADPW (86 aa). Residues 426 to 435 show a composition bias toward basic and acidic residues; it reads ESTEPKESRD. 2 consecutive repeat copies span residues 523–525 and 536–538. Residues 523–635 are 3 X 3 AA repeats of N-P-F; that stretch reads NPFLTGLGVP…LPPQAGTNPF (113 aa). A compositionally biased stretch (pro residues) spans 607 to 616; it reads PPPASLPQPL. A disordered region spans residues 607-636; the sequence is PPPASLPQPLLPTSGPMGPLPPQAGTNPFL. Residues 633–635 form repeat 3; that stretch reads NPF.

Belongs to the epsin family.

It localises to the cytoplasm. Its subcellular location is the cell cortex. It is found in the perinuclear region. The protein resides in the cytoplasmic vesicle. The protein localises to the clathrin-coated vesicle. The sequence is that of Epsin-3 (Epn3) from Mus musculus (Mouse).